Here is a 178-residue protein sequence, read N- to C-terminus: Interleukin-10 (178 aa).

The signal sequence occupies residues 1–18; sequence MPRSALLCCLILLAGVAA. 2 cysteine pairs are disulfide-bonded: Cys30/Cys126 and Cys80/Cys132. The N-linked (GlcNAc...) asparagine glycan is linked to Asn134.

It belongs to the IL-10 family. Homodimer. Interacts with IL10RA and IL10RB.

It is found in the secreted. Major immune regulatory cytokine that acts on many cells of the immune system where it has profound anti-inflammatory functions, limiting excessive tissue disruption caused by inflammation. Mechanistically, IL10 binds to its heterotetrameric receptor comprising IL10RA and IL10RB leading to JAK1 and STAT2-mediated phosphorylation of STAT3. In turn, STAT3 translocates to the nucleus where it drives expression of anti-inflammatory mediators. Targets antigen-presenting cells (APCs) such as macrophages and monocytes and inhibits their release of pro-inflammatory cytokines including granulocyte-macrophage colony-stimulating factor /GM-CSF, granulocyte colony-stimulating factor/G-CSF, IL-1 alpha, IL-1 beta, IL-6, IL-8 and TNF-alpha. Also interferes with antigen presentation by reducing the expression of MHC-class II and co-stimulatory molecules, thereby inhibiting their ability to induce T cell activation. In addition, controls the inflammatory response of macrophages by reprogramming essential metabolic pathways including mTOR signaling. The sequence is that of Interleukin-10 (IL10) from Lama glama (Llama).